A 375-amino-acid polypeptide reads, in one-letter code: uncharacterized protein (375 aa).

The protein belongs to the IMPDH/GMPR family.

This is an uncharacterized protein from Mycobacterium leprae (strain TN).